Reading from the N-terminus, the 634-residue chain is Ankyrin repeat and SOCS box protein 2 (634 aa).

The region spanning 26–45 (SEEELLQMAIEQSLADKTRG) is the UIM domain. Residues 36–82 (EQSLADKTRGPTPAEASASSQTNHQPGHFHPWTRSPSSPENPPARAP) form a disordered region. 12 ANK repeats span residues 104 to 133 (AAMDPVLKAIKEGDEEALKIMIQDGKNLAE), 137 to 167 (EGWLPLHEAAYYGQLGCLKVLQQAYPGTIDQ), 171 to 200 (QEETALYLATCREHLDCLLSLLQAGAEPDI), 204 to 233 (SRETPLYKACERKNAEAVRILVRYNADANH), 237 to 266 (RGWTALHESVSRNDLEVMEILVSGGAKVEA), 270 to 299 (YSITPLFVAAQSGQLEALRFLAKHGADINT), 303 to 332 (DSASALYEASKNEHEDVVEFLLSQGADANK), 336 to 365 (DGLLPLHVASKKGNYRIVQMLLPVTSRTRV), 368 to 397 (SGISPLHLAAERNHDAVLEALLAARFDVNA), 410 to 439 (RRSSALYFAVVNNNVYATELLLLAGADPNR), 440 to 469 (DVISPLLVAIRHGCLRTMQLLLDHGANIDA), and 476 to 504 (TAFPATIMFAMKCLSLLKFLMDLGCDGEP). S371 bears the Phosphoserine mark. The SOCS box domain maps to 580 to 634 (EDWAVIKEKAEPPRPLAHLCRLRVRKAIGKYRIKLLDTLPLPGRLIRYLKYENTQ).

This sequence belongs to the ankyrin SOCS box (ASB) family. As to quaternary structure, component of a probable ECS E3 ubiquitin-protein ligase complex which contains CUL5, either RBX1 or RNF7/RBX2, Elongin BC complex (ELOB and ELOC) and ASB2. Interacts with SKP2. Through its interaction with SKP2, likely to bridge the formation of dimeric E3-ubiquitin-protein ligase complexes composed of an ECS complex and an SCF(SKP2) complex. Interacts with JAK2; the interaction targets JAK2 for Notch-mediated proteasomal degradation. Interacts with TCF3/E2A; the interaction is mediated by SKP2 and targets TCF3 for Notch-mediated proteasomal degradation. Interacts with DES. Post-translationally, monoubiquitinated. Not monoubiquitinated. In terms of processing, phosphorylation at Ser-371 is required for association with FLNA and subsequent FLNA degradation. As to expression, highest expression in muscle, heart and spleen. Highly expressed in cells of the first and second heart fields in the developing embryonic heart. At 9.5 dpc, robust expression predominantly in the left and right ventricles (RV) and to a lower extent in inflow and outflow tracts. At 10.5 and 11.5 dpc, expression is restricted to the myocardium with no expression observed in the endocardium. In terms of tissue distribution, not expressed in immature dendritic cells. Highly expressed in adult skeletal muscle with very low levels in adult bone marrow. Expressed in immature dendritic cells and in primary dendritic cells derived from the spleen. Highly expressed in adult bone marrow with negligible levels in adult skeletal muscle. Expressed at higher levels in T helper type 2 (Th2) cells than in regulatory T (Treg) cells, type 1 helper T (Th1) cells and T helper 17 (Th17) cells.

It is found in the cytoplasm. Its subcellular location is the cytoskeleton. The protein resides in the stress fiber. The protein localises to the myofibril. It localises to the sarcomere. It is found in the z line. The protein operates within protein modification; protein ubiquitination. Functionally, substrate-recognition component of a SCF-like ECS (Elongin-Cullin-SOCS-box protein) E3 ubiquitin-protein ligase complex which mediates the ubiquitination and subsequent proteasomal degradation of target proteins. Mediates Notch-induced ubiquitination and degradation of substrates including TCF3/E2A and JAK2. Required during embryonic heart development for complete heart looping. Required for cardiomyocyte differentiation. Specifically promotes the ubiquitination of SMAD9 and targets it for proteasomal degradation, leading to avoid excessive accumulation of SMAD9. Plays a role in the regulation of NK-cell migration by modulating protein levels of filamin A/FLNA via regulation of its ubiquitination and proteasome degradation. In terms of biological role, involved in myogenic differentiation and targets filamin FLNB for proteasomal degradation but not filamin FLNA. Also targets DES for proteasomal degradation. Acts as a negative regulator of skeletal muscle mass. Its function is as follows. Targets filamins FLNA and FLNB for proteasomal degradation. This leads to enhanced adhesion of hematopoietic cells to fibronectin. Required for FLNA degradation in immature cardiomyocytes which is necessary for actin cytoskeleton remodeling, leading to proper organization of myofibrils and function of mature cardiomyocytes. Required for degradation of FLNA and FLNB in immature dendritic cells (DC) which enhances immature DC migration by promoting DC podosome formation and DC-mediated degradation of the extracellular matrix. Does not promote proteasomal degradation of tyrosine-protein kinases JAK1 or JAK2 in hematopoietic cells. The chain is Ankyrin repeat and SOCS box protein 2 from Mus musculus (Mouse).